Here is a 147-residue protein sequence, read N- to C-terminus: Hemoglobin subunit deltaH (147 aa).

Positions 3 to 147 (RLTDSEKAEV…MANALAHKYH (145 aa)) constitute a Globin domain. His-64 and His-93 together coordinate heme b.

It belongs to the globin family. Heterotetramer of two delta chains and two alpha chains. As to expression, red blood cells.

The sequence is that of Hemoglobin subunit deltaH from Heterohyrax brucei (Yellow-spotted hyrax).